The chain runs to 192 residues: uncharacterized protein (192 aa).

In terms of domain architecture, Nudix hydrolase spans glutamine 29–histidine 160. A Nudix box motif is present at residues glycine 67 to alanine 89. Residues glutamate 83 and glutamate 87 each contribute to the Mg(2+) site.

The protein belongs to the Nudix hydrolase family. PCD1 subfamily. Requires Mn(2+) as cofactor. It depends on Mg(2+) as a cofactor.

In terms of biological role, probably mediates the hydrolysis of some nucleoside diphosphate derivatives. This is an uncharacterized protein from Cronobacter sakazakii (strain ATCC BAA-894) (Enterobacter sakazakii).